The sequence spans 101 residues: Small ribosomal subunit protein uS14 (101 aa).

It belongs to the universal ribosomal protein uS14 family. In terms of assembly, part of the 30S ribosomal subunit. Contacts proteins S3 and S10.

Its function is as follows. Binds 16S rRNA, required for the assembly of 30S particles and may also be responsible for determining the conformation of the 16S rRNA at the A site. This chain is Small ribosomal subunit protein uS14, found in Stenotrophomonas maltophilia (strain K279a).